The chain runs to 165 residues: E3 ubiquitin-protein ligase RNF181 (165 aa).

The RING-type; atypical zinc-finger motif lies at 88–129 (CPVCLLEFEEEETVIEMPCHHLFHSNCILPWLSKTNSCPLCR). The disordered stretch occupies residues 136–165 (DDSYEEHKKDKARRQQQQHRLENLHGAMYT). At threonine 165 the chain carries Phosphothreonine.

It belongs to the RNF181 family. As to quaternary structure, directly interacts with ITGA2B and, as a result, with integrin ITGA2B/ITGB3. There is no evidence that integrin ITGA2B/ITGB3 is an endogenous substrate for RNF181-directed ubiquitination. Post-translationally, auto-ubiquitinated as part of the enzymatic reaction.

It carries out the reaction S-ubiquitinyl-[E2 ubiquitin-conjugating enzyme]-L-cysteine + [acceptor protein]-L-lysine = [E2 ubiquitin-conjugating enzyme]-L-cysteine + N(6)-ubiquitinyl-[acceptor protein]-L-lysine.. The protein operates within protein modification; protein ubiquitination. Its function is as follows. E3 ubiquitin-protein ligase which accepts ubiquitin from an E2 ubiquitin-conjugating enzyme in the form of a thioester and then directly transfers the ubiquitin to targeted substrates. Catalyzes monoubiquitination of 26S proteasome subunit PSMC2/RPT1. In Rattus norvegicus (Rat), this protein is E3 ubiquitin-protein ligase RNF181 (Rnf181).